The primary structure comprises 2517 residues: Non-reducing polyketide synthase pkbA (2517 aa).

Residues 59-250 (LERVAGPAEK…KRFDLRGRFH (192 aa)) form an N-terminal acylcarrier protein transacylase domain (SAT) region. A Ketosynthase family 3 (KS3) domain is found at 380–775 (SEPIAIIGMG…SANTVSSLKE (396 aa)). Active-site for beta-ketoacyl synthase activity residues include Cys547, His682, and His721. Residues 849–1158 (AFGGQVARSV…TGTAALADAT (310 aa)) form a malonyl-CoA:ACP transacylase (MAT) domain region. Residue Ser935 is the For acyl/malonyl transferase activity of the active site. Residues 1221–1353 (EEFLTFVKYK…GTVVLRENDT (133 aa)) form an N-terminal hotdog fold region. Positions 1221-1530 (EEFLTFVKYK…FTRVQISSLG (310 aa)) constitute a PKS/mFAS DH domain. The tract at residues 1251–1525 (FVKGHAVLAE…ILGAHFTRVQ (275 aa)) is product template (PT) domain. The active-site Proton acceptor; for dehydratase activity is His1255. The tract at residues 1379–1530 (DCHILQGPVV…FTRVQISSLG (152 aa)) is C-terminal hotdog fold. Asp1437 serves as the catalytic Proton donor; for dehydratase activity. Residues 1574–1651 (RPTLEISEKL…SISKCLASYL (78 aa)) enclose the Carrier 1 domain. At Ser1611 the chain carries O-(pantetheine 4'-phosphoryl)serine. A disordered region spans residues 1659–1684 (QPEDLADADSVESDSDMPTGAVTSGI). A compositionally biased stretch (acidic residues) spans 1662-1673 (DLADADSVESDS). Residues 1685 to 1761 (TTPDDAVSRL…DLIALVPALN (77 aa)) enclose the Carrier 2 domain. Residue Ser1721 is modified to O-(pantetheine 4'-phosphoryl)serine. Residues 1976 to 2075 (LELGGGTGGT…IHRMLRPDGF (100 aa)) are methyltransferase (CMeT) domain. Residues 2200 to 2514 (LMIHGGGHIM…RGYDFLKEEV (315 aa)) are thioesterase (TE) domain.

It depends on pantetheine 4'-phosphate as a cofactor.

It catalyses the reaction 3 malonyl-CoA + acetyl-CoA + S-adenosyl-L-methionine + H(+) = 3-methylorsellinate + S-adenosyl-L-homocysteine + 3 CO2 + 4 CoA. It participates in phytotoxin biosynthesis. Its function is as follows. Non-reducing polyketide synthase; part of the gene cluster that mediates the biosynthesis of cichorine, a phytotoxin active against knapweed, corn, and soybeans. The first step in the pathway is performed by the non-reducing polyketide synthase pkbA that condenses one acetyl-CoA starter unit with 3 malonyl-CoA units. PkbA also catalyzes one methylation step to produce 3-methylorsellinate. The nonribosomal peptide synthase-like protein cicB, the cytochrome P450 monooxygenase cicH and the O-methyltransferase cicE are involved in the conversion of 3-methylorsellinate into nidulol. CicB converts 3-methylorsellinate to a yet unidentified intermediate, cicH may play a ring-closing role for cichorine and cicE is plausibly responsible for the methylation of one of the phenol groups. The oxidoreductase cicC acts downstream with still unidentified enzymes to further convert nidulol into cichorin. The chain is Non-reducing polyketide synthase pkbA from Emericella nidulans (strain FGSC A4 / ATCC 38163 / CBS 112.46 / NRRL 194 / M139) (Aspergillus nidulans).